A 287-amino-acid polypeptide reads, in one-letter code: Ribonuclease Z (287 aa).

Positions 64, 66, 68, 69, 124, 191, and 250 each coordinate Zn(2+). Residue Asp-68 is the Proton acceptor of the active site.

The protein belongs to the RNase Z family. Homodimer. Requires Zn(2+) as cofactor.

The catalysed reaction is Endonucleolytic cleavage of RNA, removing extra 3' nucleotides from tRNA precursor, generating 3' termini of tRNAs. A 3'-hydroxy group is left at the tRNA terminus and a 5'-phosphoryl group is left at the trailer molecule.. Its function is as follows. Zinc phosphodiesterase, which displays some tRNA 3'-processing endonuclease activity. Probably involved in tRNA maturation, by removing a 3'-trailer from precursor tRNA. This chain is Ribonuclease Z, found in Pyrobaculum calidifontis (strain DSM 21063 / JCM 11548 / VA1).